Reading from the N-terminus, the 575-residue chain is Lysine--tRNA ligase (575 aa).

Residues E412 and E419 each coordinate Mg(2+).

It belongs to the class-II aminoacyl-tRNA synthetase family. In terms of assembly, homodimer. Mg(2+) serves as cofactor.

Its subcellular location is the cytoplasm. It carries out the reaction tRNA(Lys) + L-lysine + ATP = L-lysyl-tRNA(Lys) + AMP + diphosphate. The chain is Lysine--tRNA ligase from Bacteroides fragilis (strain ATCC 25285 / DSM 2151 / CCUG 4856 / JCM 11019 / LMG 10263 / NCTC 9343 / Onslow / VPI 2553 / EN-2).